A 123-amino-acid chain; its full sequence is Large ribosomal subunit protein bL12 (123 aa).

This sequence belongs to the bacterial ribosomal protein bL12 family. In terms of assembly, homodimer. Part of the ribosomal stalk of the 50S ribosomal subunit. Forms a multimeric L10(L12)X complex, where L10 forms an elongated spine to which 2 to 4 L12 dimers bind in a sequential fashion. Binds GTP-bound translation factors.

In terms of biological role, forms part of the ribosomal stalk which helps the ribosome interact with GTP-bound translation factors. Is thus essential for accurate translation. In Zymomonas mobilis subsp. mobilis (strain ATCC 31821 / ZM4 / CP4), this protein is Large ribosomal subunit protein bL12.